A 479-amino-acid polypeptide reads, in one-letter code: UPF0164 protein TP_0865 (479 aa).

An N-terminal signal peptide occupies residues 1–49 (MVRMRRRRACSSGGACGCAAVRGARSFLSVRVLGMRIGMSALCLAPLFA).

This sequence belongs to the UPF0164 family.

This is UPF0164 protein TP_0865 from Treponema pallidum (strain Nichols).